Here is a 185-residue protein sequence, read N- to C-terminus: Ribosome-recycling factor (185 aa).

A disordered region spans residues 140–166 (KRQEKDGDITEDEQRSLEKQVQKVTDD).

The protein belongs to the RRF family.

It localises to the cytoplasm. In terms of biological role, responsible for the release of ribosomes from messenger RNA at the termination of protein biosynthesis. May increase the efficiency of translation by recycling ribosomes from one round of translation to another. This chain is Ribosome-recycling factor, found in Lactobacillus johnsonii (strain CNCM I-12250 / La1 / NCC 533).